The chain runs to 188 residues: Elongation factor P (188 aa).

Belongs to the elongation factor P family.

The protein localises to the cytoplasm. The protein operates within protein biosynthesis; polypeptide chain elongation. Its function is as follows. Involved in peptide bond synthesis. Stimulates efficient translation and peptide-bond synthesis on native or reconstituted 70S ribosomes in vitro. Probably functions indirectly by altering the affinity of the ribosome for aminoacyl-tRNA, thus increasing their reactivity as acceptors for peptidyl transferase. The polypeptide is Elongation factor P (Bacteroides fragilis (strain ATCC 25285 / DSM 2151 / CCUG 4856 / JCM 11019 / LMG 10263 / NCTC 9343 / Onslow / VPI 2553 / EN-2)).